Reading from the N-terminus, the 105-residue chain is Heat shock protein HspQ (105 aa).

The segment at 75–105 (SELQDEHPEQPSMDELAQTIRKQLQAPRLRN) is disordered.

This sequence belongs to the HspQ family.

Its subcellular location is the cytoplasm. Involved in the degradation of certain denaturated proteins, including DnaA, during heat shock stress. This is Heat shock protein HspQ from Escherichia coli O127:H6 (strain E2348/69 / EPEC).